The sequence spans 863 residues: MSESHVKISRTIIRGTSPSTVRLESPVRELEDLLDLERDARVRSERNANELSIQLDTMTERLDELSGTSSQTQDAIRRKDMEIANVRKDLENANAAFETAEATLRRKHNTMISEISSEVENLQKQKGRAEKDKSQLMLEIDNVLGQLDGALKAKASAESKLEGLDSQLTRLKALTDDLQRQMADVNSAKSRLAAENFELVRVNQEYEAQVVNFSKTKSVLEGQLDDLKRAMDEDARNRLNLQTQLSSLQMDYDNLQARYEEEAEAAGNLRNQVAKFNADMAALKTRLERELMAKTEEFEELKRKLTVRITELEDIAEHERTRANNLEKTKVKLTIEIKDLQAENEALAAENGELTHRAKQAENLANELQRRVDEMTVEINTLNSANNALEGDNMRLKGQVGDLTDRIANLDRENRQLGDQLKETKSALRDANRRLTDLEALRSQLEADGDNLASALHDAEEALKELEVKYVASQNALNHLKSEMEQRLREKDEELENLRKSTTRTIEELTTTISEMEVRFKSDMSRLKKKYEATISELEVQLDVANKANASLNRENKALAQRVQELQTALEDERRAREAAESNLQVSERKRIALTSEVEEIRSQLELSDRARKNAESELNDANGRISELTMSVNTLTNDKRRLEGDIGVMQGDLDEAVNARKAAEDRADRLNAEVLRLADELRQEQENYKRAETLRKQLEIEIREITVKLEEAEAFATREGRRMVQKLQNRVRELEAELDGEIRRAKEAFASARKYERQFKELQTQSEDDKRMILELQDLLDKTQIKMKAYKRQLEEQEEVSQLTMSKYRKAQQQIEEAEHRADMAERTITIKRTIGGPGSRAVSVVREINSVSRGNRATSIM.

The tract at residues 1-26 (MSESHVKISRTIIRGTSPSTVRLESP) is nonhelical region. Residues 27–836 (VRELEDLLDL…ERTITIKRTI (810 aa)) adopt a coiled-coil conformation. A nonhelical region region spans residues 837-863 (GGPGSRAVSVVREINSVSRGNRATSIM).

It belongs to the paramyosin family. As to quaternary structure, homodimer.

It localises to the cytoplasm. The protein localises to the myofibril. Its function is as follows. Paramyosin is a major structural component of many thick filaments isolated from invertebrate muscles. In Echinococcus granulosus (Hydatid tapeworm), this protein is Paramyosin.